Here is a 293-residue protein sequence, read N- to C-terminus: Xylanase inhibitor protein XIP (293 aa).

The first 21 residues, 1–21 (MALRRLAALLSLAVLLSAGLA), serve as a signal peptide directing secretion. A GH18 domain is found at 31 to 293 (GDTVIIWGRN…DKKTGFTAHL (263 aa)). Intrachain disulfides connect Cys-50/Cys-92 and Cys-189/Cys-218.

Belongs to the glycosyl hydrolase 18 family. Xylanase inhibitor subfamily. As to expression, expressed in mature grain.

It is found in the secreted. In terms of biological role, fungal xylanase inhibitor. Possesses competitive inhibiting activity against several fungal endo-1,4-beta-D-xylanases belonging to glycoside hydrolase family 10 (GH10) and family 11 (GH11). May function in plant defense against secreted fungal pathogen xylanases. Is similar to class III chitinases, but does not exhibit chitinase activity. The protein is Xylanase inhibitor protein XIP of Oryza sativa subsp. japonica (Rice).